The primary structure comprises 290 residues: Lipoyl synthase (290 aa).

[4Fe-4S] cluster-binding residues include cysteine 44, cysteine 49, cysteine 55, cysteine 70, cysteine 74, cysteine 77, and serine 282. A Radical SAM core domain is found at 56–271 (WGEGTATFMI…ELLGKEMGFR (216 aa)).

It belongs to the radical SAM superfamily. Lipoyl synthase family. [4Fe-4S] cluster serves as cofactor.

Its subcellular location is the cytoplasm. It carries out the reaction [[Fe-S] cluster scaffold protein carrying a second [4Fe-4S](2+) cluster] + N(6)-octanoyl-L-lysyl-[protein] + 2 oxidized [2Fe-2S]-[ferredoxin] + 2 S-adenosyl-L-methionine + 4 H(+) = [[Fe-S] cluster scaffold protein] + N(6)-[(R)-dihydrolipoyl]-L-lysyl-[protein] + 4 Fe(3+) + 2 hydrogen sulfide + 2 5'-deoxyadenosine + 2 L-methionine + 2 reduced [2Fe-2S]-[ferredoxin]. The protein operates within protein modification; protein lipoylation via endogenous pathway; protein N(6)-(lipoyl)lysine from octanoyl-[acyl-carrier-protein]: step 2/2. Catalyzes the radical-mediated insertion of two sulfur atoms into the C-6 and C-8 positions of the octanoyl moiety bound to the lipoyl domains of lipoate-dependent enzymes, thereby converting the octanoylated domains into lipoylated derivatives. The polypeptide is Lipoyl synthase (Flavobacterium psychrophilum (strain ATCC 49511 / DSM 21280 / CIP 103535 / JIP02/86)).